The sequence spans 243 residues: Tyrosine recombinase XerD-like (243 aa).

Residues 1–72 (MKEYIRPFLN…AVNQFLYFLY (72 aa)) form the Core-binding (CB) domain. A Tyr recombinase domain is found at 85 to 243 (LPKVSVSKEQ…KTMITLEKYR (159 aa)). Catalysis depends on residues Lys-149 and Arg-210. Tyr-242 acts as the O-(3'-phospho-DNA)-tyrosine intermediate in catalysis.

This sequence belongs to the 'phage' integrase family. XerD-like subfamily.

The protein resides in the cytoplasm. Its function is as follows. Putative tyrosine recombinase. Not involved in the cutting and rejoining of the recombining DNA molecules on dif(SL) site. This is Tyrosine recombinase XerD-like from Streptococcus sanguinis (strain SK36).